The chain runs to 129 residues: Chromatin accessibility complex protein 1 (129 aa).

The residue at position 2 (alanine 2) is an N-acetylalanine. Lysine 102 carries the post-translational modification N6-acetyllysine. Positions 104–120 (LKMLKEKREEEEDNEDD) form a coiled coil. Residues 109–129 (EKREEEEDNEDDGSDLGEALA) are disordered. Over residues 112-123 (EEEEDNEDDGSD) the composition is skewed to acidic residues. Serine 122 is subject to Phosphoserine.

Heterodimer with POLE3; binds to DNA. Component of the CHRAC ISWI chromatin remodeling complex at least composed of SMARCA5/SNF2H, BAZ1A/ACF1, CHRAC1 and POLE3; the complex preferentially binds DNA through the CHRAC1-POLE3 heterodimer and possesses ATP-dependent nucleosome-remodeling activity. Within the complex, the heterodimer with POLE3 interacts with SMARCA5/SNF2H; the interaction is direct and enhances nucleosome sliding activity by the SMARCA5/SNF2H and BAZ1A/ACF1 interaction. Within the complex, the heterodimer with POLE3 interacts with BAZ1A/ACF1; the interactions are direct. As to expression, ubiquitously expressed.

Its subcellular location is the nucleus. Its function is as follows. Forms a complex with DNA polymerase epsilon subunit POLE3 and binds naked DNA, which is then incorporated into chromatin, aided by the nucleosome remodeling activity of ISWI/SNF2H and ACF1. Does not enhance nucleosome sliding activity of the ACF-5 ISWI chromatin remodeling complex. The sequence is that of Chromatin accessibility complex protein 1 (Chrac1) from Mus musculus (Mouse).